We begin with the raw amino-acid sequence, 290 residues long: Protein translocase subunit SecF (290 aa).

6 helical membrane passes run 15 to 35, 131 to 151, 156 to 176, 184 to 204, 234 to 256, and 260 to 282; these read VFMI…FTKG, KAIL…TVRF, AISA…IFAI, SFIA…IIVF, TLYT…GVVL, and ILAI…SAIL.

Belongs to the SecD/SecF family. SecF subfamily. Forms a complex with SecD. Part of the essential Sec protein translocation apparatus which comprises SecA, SecYEG and auxiliary proteins SecDF. Other proteins may also be involved.

The protein localises to the cell inner membrane. Part of the Sec protein translocase complex. Interacts with the SecYEG preprotein conducting channel. SecDF uses the proton motive force (PMF) to complete protein translocation after the ATP-dependent function of SecA. The chain is Protein translocase subunit SecF from Dictyoglomus turgidum (strain DSM 6724 / Z-1310).